The chain runs to 245 residues: NAD-dependent protein deacylase (245 aa).

The Deacetylase sirtuin-type domain maps to 1–245; that stretch reads MEAVWESARI…RLSRAMGIDI (245 aa). 22–41 contacts NAD(+); sequence GAGISAESGIPTFRGKDGLW. Y66 and R69 together coordinate substrate. 100-103 provides a ligand contact to NAD(+); sequence QNVD. The Proton acceptor role is filled by H118. Zn(2+) contacts are provided by C126, C129, C146, and C149. Residues 186–188, 212–214, and M241 each bind NAD(+); these read GTS and NPE.

It belongs to the sirtuin family. Class III subfamily. The cofactor is Zn(2+).

Its subcellular location is the cytoplasm. It catalyses the reaction N(6)-acetyl-L-lysyl-[protein] + NAD(+) + H2O = 2''-O-acetyl-ADP-D-ribose + nicotinamide + L-lysyl-[protein]. The catalysed reaction is N(6)-succinyl-L-lysyl-[protein] + NAD(+) + H2O = 2''-O-succinyl-ADP-D-ribose + nicotinamide + L-lysyl-[protein]. Functionally, NAD-dependent lysine deacetylase and desuccinylase that specifically removes acetyl and succinyl groups on target proteins. Modulates the activities of several proteins which are inactive in their acylated form. Deacetylates the N-terminal lysine residue of Alba, the major archaeal chromatin protein and that, in turn, increases Alba's DNA binding affinity, thereby repressing transcription. The polypeptide is NAD-dependent protein deacylase (Aeropyrum pernix (strain ATCC 700893 / DSM 11879 / JCM 9820 / NBRC 100138 / K1)).